The sequence spans 552 residues: MSTYSIPYYNQMNGNYNNGMPQQTTAANQQAFPQQQQPTTTGNASQQQQQAAATAAAVQQPYNYMFYQQQGQPGQQTGQTAGQQQQQQQQQQQYDYNTYNRYQYPAATSQGNYYQQTIPNQLSQPQPQHYNGSNRNYTSAPSGAPIPSNSTSGPSQQPPLPGQQAVPIPPHVSTMQQPTPVQDTLNASSTSTVGQFQPPGIRPRVTTTMWEDEKTLCYQVDANNVSVVRRADNNMINGTKLLNVAQMTRGRRDGILKSEKVRHVVKIGSMHLKGVWIPFERALAMAQREQIVDMLYPLFVRDIKRVIQTGVTPNAAAATAAAAATATSASAPPPPPPPVAAATTTAATAISKSSSGNGNSISATSGGSNVSGASGAGSTTSPVNTKAATAAGIPQGNYYQTYNQQQYPQQYGQYNAPGKNQNTPASQPGSTTNDQYLQQQQQQQQQMYGYQSNYYQGGAANSSYYPNYYQQQQPNYASSYPYQQQQQKQQQQQPNQQQQSDQQQTSTPSGGAGTRSVHQSPQVQSLTQGSVHPSPQQHQANQSASTVAKEEK.

Disordered regions lie at residues 17 to 48 (NNGM…SQQQ), 70 to 93 (QGQP…QQQQ), and 121 to 180 (QLSQ…QPTP). Positions 121 to 151 (QLSQPQPQHYNGSNRNYTSAPSGAPIPSNST) are enriched in polar residues. The region spanning 204–310 (RVTTTMWEDE…RDIKRVIQTG (107 aa)) is the HTH APSES-type domain. Residues 238–259 (GTKLLNVAQMTRGRRDGILKSE) constitute a DNA-binding region (H-T-H motif). 3 disordered regions span residues 327-384 (TSAS…SPVN), 410-447 (QYGQ…QQQM), and 478-552 (SSYP…KEEK). The span at 340-381 (AAATTTAATAISKSSSGNGNSISATSGGSNVSGASGAGSTTS) shows a compositional bias: low complexity. Residues 419 to 434 (KNQNTPASQPGSTTND) are compositionally biased toward polar residues. Composition is skewed to low complexity over residues 435–447 (QYLQ…QQQM) and 478–504 (SSYP…DQQQ). The segment covering 516 to 546 (SVHQSPQVQSLTQGSVHPSPQQHQANQSAST) has biased composition (polar residues).

The protein belongs to the EFG1/PHD1/stuA family.

Its subcellular location is the nucleus. Putative transcription factor that stimulates pseudohyphal morphogenesis. This chain is Enhanced filamentous growth protein (EFG1), found in Candida albicans (Yeast).